The following is a 241-amino-acid chain: MKGLLAGTIAAATFAVASAGEYCGQWDWAKSTQYTVYNNLWNKNAAASGSQCTGVDKISGSTIGWHTSYTWTGGAATEVKSYSNAALIFSPKQIKNIKTIPTKMKYSYSHSSGTFVADVSYDLFTSSTATGKNEYEIMIWLAAYGGAGPISSTGKAIATVTIGSNSFKLYKGPNGSTTVFSFVATKTITNFTADLQKFLTYLVNSQGLPSSQYLITLEAGTEPFVGTNAKMTVSSYSAAVN.

Residues 1-19 (MKGLLAGTIAAATFAVASA) form the signal peptide. Glu-136 is a catalytic residue. Asn-174 and Asn-190 each carry an N-linked (GlcNAc...) asparagine glycan. Glu-222 is an active-site residue.

This sequence belongs to the glycosyl hydrolase 12 (cellulase H) family. As to quaternary structure, interacts with host apoplastic glucanase inhibitor GIP2.

It catalyses the reaction xyloglucan + H2O = xyloglucan oligosaccharides.. With respect to regulation, the xyloglucanase activity is inhibited by the binding of the host apoplastic glucanase inhibitor GIP2. In terms of biological role, glycoside hydrolase that exhibits xyloglucanase activity. Acts as an important virulence factor during P.parasitica infection of its host Nicotiana benthamiana. Also acts as a pathogen-associated molecular pattern (PAMP) in host species, where it can trigger defense responses including cell death. The PAMP activity is independent of its xyloglucanase activity. With paralog XLP1, is required to elevate apoplastic sugar during P.parasitica infection. The protein is Xyloglucan-specific endo-beta-1,4-glucanase 1 of Phytophthora nicotianae (strain INRA-310) (Phytophthora parasitica).